Here is a 291-residue protein sequence, read N- to C-terminus: Small ribosomal subunit protein uS2 (291 aa).

Residues 270–291 (NINEEANTEFEQALSDADEDKN) form a disordered region.

The protein belongs to the universal ribosomal protein uS2 family.

The protein is Small ribosomal subunit protein uS2 of Rickettsia bellii (strain OSU 85-389).